The sequence spans 767 residues: Protein transport protein Sec23B (767 aa).

Residue alanine 2 is modified to N-acetylalanine. Zn(2+)-binding residues include cysteine 61, cysteine 66, cysteine 85, and cysteine 88. Lysine 564 is modified (N6-acetyllysine). One copy of the Gelsolin-like repeat lies at 634–720; the sequence is PEPVLLDSSS…EHGGSQARFL (87 aa).

Belongs to the SEC23/SEC24 family. SEC23 subfamily. COPII is composed of at least five proteins: the Sec23/24 complex, the Sec13/31 complex and Sar1. Interacts with SAR1A. In terms of tissue distribution, ubiquitously expressed.

It is found in the cytoplasmic vesicle. The protein localises to the COPII-coated vesicle membrane. The protein resides in the endoplasmic reticulum membrane. It localises to the cytoplasm. Its subcellular location is the cytosol. Component of the coat protein complex II (COPII) which promotes the formation of transport vesicles from the endoplasmic reticulum (ER). The coat has two main functions, the physical deformation of the endoplasmic reticulum membrane into vesicles and the selection of cargo molecules for their transport to the Golgi complex. In Homo sapiens (Human), this protein is Protein transport protein Sec23B.